A 236-amino-acid chain; its full sequence is Terpene cyclase andB (236 aa).

Helical transmembrane passes span 13–33, 45–65, 70–90, 106–126, 135–155, 166–186, and 200–220; these read TVVNLLGSASGIGWILNYILM, MSMLPLCCNIAWEFVYGILCP, VVRPVILSWLVLNCLVVYAAI, HLPLLFTVGIAACTGFHIALI, FLWSARSCQVLLSIGGLFQLL, VLWLSRFLGSICGVLKMTLMW, and LTAYCIALWIISDVLYGVVFY.

Belongs to the paxB family.

Its subcellular location is the membrane. Its pathway is secondary metabolite biosynthesis; terpenoid biosynthesis. Terpene cyclase; part of the gene cluster that mediates the biosynthesis of anditomin, a fungal meroterpenoid. The first step of the pathway is the synthesis of 3,5-dimethylorsellinic acid (DMOA) by the polyketide synthase andM. DMOA is then converted to the phthalide compound 5,7-dihydroxy-4,6-dimethylphthalide (DHDMP) by the cytochrome P450 monooxygenase andK, which is further prenylated by the prenyltransferase andD to yield farnesyl-DHDMP. Further epoxidation by the FAD-dependent monooxygenase andE leads to epoxyfarnesyl-DHDMP. The next step involves the terpene cyclase andB that converts epoxyfarnesyl-DHDMP into preandiloid A through opening of the epoxide ring followed by the cyclization of the farnesyl moiety. Preandiloid A is in turn oxidized at the C-3 hydroxyl group to yield preandiloid B by the dehydrogenase andC. The dioxygenase andA is solely responsible for the dehydrogenation of preandiloid B leading to the enone preandiloid C, as well as for the intriguing structural rearrangement to generate the bicyclo[2.2.2]octane core, transforming preandiloid C into andiconin. FAD-binding monooxygenase andJ then produces andilesin D which is reduced by dehydrogenase andI to yield andilesin A. Action of acetyltransferase andG followed by a spontaneous acetate elimination leads then to andilesin B, which is in turn substrate of the short chain dehydrogenase andH to yield andilesin C. Finally, the dioxygenase andF catalyzes the transformation of andilesin C to anditomin. This chain is Terpene cyclase andB, found in Emericella variicolor (Aspergillus stellatus).